A 225-amino-acid polypeptide reads, in one-letter code: Small ribosomal subunit protein eS1 (225 aa).

The protein belongs to the eukaryotic ribosomal protein eS1 family.

This Methanococcus maripaludis (strain C6 / ATCC BAA-1332) protein is Small ribosomal subunit protein eS1.